Here is a 409-residue protein sequence, read N- to C-terminus: Multidrug efflux pump Tap (409 aa).

12 helical membrane-spanning segments follow: residues 10 to 30, 46 to 66, 80 to 98, 104 to 123, 144 to 168, 174 to 193, 218 to 240, 260 to 282, 289 to 308, 313 to 335, 348 to 370, and 375 to 397; these read LLIL…IVAF, IVAM…GAAV, LLSA…IFGV, AVLA…GMTA, SVYE…IATL, MWVT…VLRL, FVWY…GLYM, LGWV…AVMS, ATML…IAFL, LILV…YNYV, VVGV…AGPL, and GLHA…AVFL.

Belongs to the major facilitator superfamily. Drug:H(+) antiporter-3 (DHA3) (TC 2.A.1.21) family.

It is found in the cell inner membrane. With respect to regulation, efflux activity is inhibited by carbonyl cyanide m-chlorophenylhydrazone (CCCP) and reserpine, but not by o-vanadate or chlorpromazine (CPZ). Efflux pump that contributes to intrinsic antibiotic resistance. The pump uses the electrochemical gradient as a source of energy. Confers low-level resistance to tetracycline and to several aminoglycosides, including streptomycin, gentamicin, 2'-N-ethylnetilmicin and 6'-N-ethylnetilmicin. The polypeptide is Multidrug efflux pump Tap (Mycolicibacterium fortuitum (Mycobacterium fortuitum)).